Reading from the N-terminus, the 527-residue chain is UDP-glucuronosyltransferase 2A1 (527 aa).

Residues 1-20 form the signal peptide; the sequence is MLKNILLWSLQLSLLGMSLG. Residues 21 to 490 are Extracellular-facing; the sequence is GNVLIWPMEG…LSWFQYHSLD (470 aa). Asparagine 49 carries an N-linked (GlcNAc...) asparagine glycan. At lysine 134 the chain carries N6-succinyllysine. N-linked (GlcNAc...) asparagine glycosylation is present at asparagine 313. Residues 491–507 traverse the membrane as a helical segment; it reads VIGFLLACMASAILLVI. Topologically, residues 508–527 are cytoplasmic; that stretch reads KCCLFVFQKIGKTXKKNKRD.

Belongs to the UDP-glycosyltransferase family. Olfactory epithelium. Mainly found in the sustentacular cells and to a lesser extent in Bowman's gland cells. Also expressed in the olfactory sensory neuron nuclei. Neuronal localization within the olfactory bulb is mainly found in the deeper granular cells.

The protein localises to the membrane. The catalysed reaction is glucuronate acceptor + UDP-alpha-D-glucuronate = acceptor beta-D-glucuronoside + UDP + H(+). It catalyses the reaction 16beta,17beta-estriol + UDP-alpha-D-glucuronate = 16beta,17beta-estriol 16-O-(beta-D-glucuronate) + UDP + H(+). It carries out the reaction 16alpha,17alpha-estriol + UDP-alpha-D-glucuronate = 16alpha,17alpha-estriol 16-O-(beta-D-glucuronate) + UDP + H(+). The enzyme catalyses 17alpha-estradiol + UDP-alpha-D-glucuronate = 17alpha-estradiol 17-O-(beta-D-glucuronate) + UDP + H(+). The catalysed reaction is 17alpha-estradiol + UDP-alpha-D-glucuronate = 17alpha-estradiol 3-O-(beta-D-glucuronate) + UDP + H(+). It catalyses the reaction 17beta-estradiol + UDP-alpha-D-glucuronate = 17beta-estradiol 3-O-(beta-D-glucuronate) + UDP + H(+). It carries out the reaction 17beta-estradiol + UDP-alpha-D-glucuronate = 17beta-estradiol 17-O-(beta-D-glucuronate) + UDP + H(+). The enzyme catalyses testosterone + UDP-alpha-D-glucuronate = testosterone 17-O-(beta-D-glucuronate) + UDP + H(+). The catalysed reaction is epitestosterone + UDP-alpha-D-glucuronate = epitestosterone 17-O-(beta-D-glucuronate) + UDP + H(+). It catalyses the reaction lithocholate + UDP-alpha-D-glucuronate = lithocholoyl-3-O-(beta-D-glucuronate) + UDP + H(+). It carries out the reaction lithocholate + UDP-alpha-D-glucuronate = lithocholoyl-24-O-(beta-D-glucuronate) + UDP. The enzyme catalyses deoxycholate + UDP-alpha-D-glucuronate = deoxycholoyl-24-O-(beta-D-glucuronate) + UDP. The catalysed reaction is hyodeoxycholate + UDP-alpha-D-glucuronate = hyodeoxycholate 6-O-(beta-D-glucuronate) + UDP + H(+). It catalyses the reaction hyocholate + UDP-alpha-D-glucuronate = hyocholoyl-24-O-(beta-D-glucuronate) + UDP. UDP-glucuronosyltransferase (UGT) that catalyzes phase II biotransformation reactions in which lipophilic substrates are conjugated with glucuronic acid to increase the metabolite's water solubility, thereby facilitating excretion into either the urine or bile. Essential for the elimination and detoxification of drugs, xenobiotics and endogenous compounds. Catalyzes the glucuronidation of endogenous steroid hormones such as androgens (testosterones) and estrogens (estradiol and estriol). Contributes to bile acid (BA) detoxification by catalyzing the glucuronidation of BA substrates, which are natural detergents for dietary lipids absorption. Shows a high affinity to aliphatic odorants such as citronellol as well as olfactory tissue specificity, and therefore may be involved in olfaction. In Rattus norvegicus (Rat), this protein is UDP-glucuronosyltransferase 2A1.